The chain runs to 572 residues: mRNA cap guanine-N(7) methyltransferase (572 aa).

Disordered stretches follow at residues 1–75 and 110–140; these read MPED…GSRV and EKAI…FPSS. 2 stretches are compositionally biased toward basic and acidic residues: residues 24-39 and 59-69; these read ANDG…RVHD and SADENKDKKYD. Low complexity predominate over residues 123-140; sequence TTTTPSSTTSSSSSFPSS. In terms of domain architecture, mRNA cap 0 methyltransferase spans 262–571; it reads SPIYKLRNFN…FYVAFVFEKV (310 aa). Residue 271 to 272 coordinates mRNA; sequence NN. Residues Lys275, Cys302, Asp324, Asp366, Gln396, and Tyr401 each coordinate S-adenosyl-L-methionine.

The protein belongs to the class I-like SAM-binding methyltransferase superfamily. mRNA cap 0 methyltransferase family.

Its subcellular location is the nucleus. It catalyses the reaction a 5'-end (5'-triphosphoguanosine)-ribonucleoside in mRNA + S-adenosyl-L-methionine = a 5'-end (N(7)-methyl 5'-triphosphoguanosine)-ribonucleoside in mRNA + S-adenosyl-L-homocysteine. Responsible for methylating the 5'-cap structure of mRNAs. In Lodderomyces elongisporus (strain ATCC 11503 / CBS 2605 / JCM 1781 / NBRC 1676 / NRRL YB-4239) (Yeast), this protein is mRNA cap guanine-N(7) methyltransferase (ABD1).